Reading from the N-terminus, the 382-residue chain is O-methyltransferase okaF (382 aa).

Positions 249 and 287 each coordinate S-adenosyl-L-methionine. Histidine 291 (proton acceptor) is an active-site residue.

Belongs to the class I-like SAM-binding methyltransferase superfamily. Cation-independent O-methyltransferase family.

The enzyme catalyses 3-desmethyl okaramine B + S-adenosyl-L-methionine = okaramine B + S-adenosyl-L-homocysteine + H(+). It participates in alkaloid biosynthesis. In terms of biological role, O-methyltransferase; part of the gene cluster that mediates the biosynthesis of okaramine B, a prenylated indole alkaloid that possesses an unusual octacyclic ring system, including a four-membered azetidine ring and an eight-membered azocine ring, and that exhibits insecticidal activity against silkworm larvae. Within the pathway, okaF catalyzes the last step which is the methylation of 3-desmethyl okaramine B to produce okaramine B. With okaG, OkaF is also able to produce okaramine D from okaramine E. The biosynthesis begins with the NRPS okaA that condenses two tryptophan molecules into cyclo(L-Trp-L-Trp). Prenylation by the prenyltransferase okaC then leads to the formation of cyclo(N8-(alpha,alpha-dimethylallyl)-L-Trp-6a-(alpha,alpha-dime-thylallyl)-L-Trp). This is followed by indole 2,3-epoxidation by the FAD-dependent monooxygenase okaB to facilitate the formation of the hexahydropyrrolo[2,3-b]indole (HPI) moiety of okaramine C. The cytochrome P450 monooxygenase okaD then likely catalyzes formation of the eight-membered ring of okaramine A. The dioxygenase okaE further forms the unusual 2-dimethyl-3-methyl-azetidine ring to yield 12-deshydroxyl okaramine E, as well as the hydroxylation of 12-deshydroxyl okaramine E to produce okaramine E. The cytochrome P450 monoxygenase okaG converts 12-deshydroxyl okaramine E into 3-desmethyl okaramine B which is further methylated by the methyltransferase okaF into okaramine B. In a shunt pathway, okaG and okaF together are also able to convert okaramine E into okaramine D. Okaramine H is produced by nonenzymatic conversion from okaramine A. The polypeptide is O-methyltransferase okaF (Penicillium ochrochloron).